Consider the following 247-residue polypeptide: Uridylate kinase (247 aa).

17–20 contacts ATP; it reads KFSG. Gly59 is a binding site for UMP. 2 residues coordinate ATP: Gly60 and Arg64. Residues Asp79 and 140–147 each bind UMP; that span reads TGNPFFTT. ATP-binding residues include Thr167, Tyr173, and Asp176.

This sequence belongs to the UMP kinase family. As to quaternary structure, homohexamer.

Its subcellular location is the cytoplasm. It catalyses the reaction UMP + ATP = UDP + ADP. It functions in the pathway pyrimidine metabolism; CTP biosynthesis via de novo pathway; UDP from UMP (UMPK route): step 1/1. Its activity is regulated as follows. Inhibited by UTP. In terms of biological role, catalyzes the reversible phosphorylation of UMP to UDP. This Legionella pneumophila (strain Lens) protein is Uridylate kinase.